Here is a 544-residue protein sequence, read N- to C-terminus: T-complex protein 1 subunit gamma (544 aa).

Cysteine 368 and cysteine 374 are oxidised to a cystine. A disordered region spans residues 525-544 (SKKRGGNEPTNPAAMAQGQE).

It belongs to the TCP-1 chaperonin family. As to quaternary structure, heterooligomeric complex of about 850 to 900 kDa that forms two stacked rings, 12 to 16 nm in diameter.

It localises to the cytoplasm. Its function is as follows. Molecular chaperone; assists the folding of proteins upon ATP hydrolysis. Known to play a role, in vitro, in the folding of actin and tubulin. The chain is T-complex protein 1 subunit gamma from Drosophila melanogaster (Fruit fly).